The sequence spans 322 residues: Phosphatidylserine decarboxylase proenzyme (322 aa).

Active-site charge relay system; for autoendoproteolytic cleavage activity residues include Asp90, His147, and Ser254. Catalysis depends on Ser254, which acts as the Schiff-base intermediate with substrate; via pyruvic acid; for decarboxylase activity. Ser254 carries the pyruvic acid (Ser); by autocatalysis modification. Residues 294–322 (EVEPAPLPADEIKAEHDASPLVDNKKDDT) are disordered. Residues 303 to 322 (DEIKAEHDASPLVDNKKDDT) show a composition bias toward basic and acidic residues.

This sequence belongs to the phosphatidylserine decarboxylase family. PSD-B subfamily. Prokaryotic type I sub-subfamily. As to quaternary structure, heterodimer of a large membrane-associated beta subunit and a small pyruvoyl-containing alpha subunit. Pyruvate serves as cofactor. Is synthesized initially as an inactive proenzyme. Formation of the active enzyme involves a self-maturation process in which the active site pyruvoyl group is generated from an internal serine residue via an autocatalytic post-translational modification. Two non-identical subunits are generated from the proenzyme in this reaction, and the pyruvate is formed at the N-terminus of the alpha chain, which is derived from the carboxyl end of the proenzyme. The autoendoproteolytic cleavage occurs by a canonical serine protease mechanism, in which the side chain hydroxyl group of the serine supplies its oxygen atom to form the C-terminus of the beta chain, while the remainder of the serine residue undergoes an oxidative deamination to produce ammonia and the pyruvoyl prosthetic group on the alpha chain. During this reaction, the Ser that is part of the protease active site of the proenzyme becomes the pyruvoyl prosthetic group, which constitutes an essential element of the active site of the mature decarboxylase.

It localises to the cell membrane. It catalyses the reaction a 1,2-diacyl-sn-glycero-3-phospho-L-serine + H(+) = a 1,2-diacyl-sn-glycero-3-phosphoethanolamine + CO2. The protein operates within phospholipid metabolism; phosphatidylethanolamine biosynthesis; phosphatidylethanolamine from CDP-diacylglycerol: step 2/2. Functionally, catalyzes the formation of phosphatidylethanolamine (PtdEtn) from phosphatidylserine (PtdSer). The chain is Phosphatidylserine decarboxylase proenzyme from Salmonella paratyphi C (strain RKS4594).